The sequence spans 548 residues: ATP synthase subunit alpha, mitochondrial (548 aa).

Residue 209 to 216 (GDRQTGKT) coordinates ATP.

Belongs to the ATPase alpha/beta chains family. As to quaternary structure, F-type ATPases have 2 components, CF(1) - the catalytic core - and CF(0) - the membrane proton channel. CF(1) has five subunits: alpha(3), beta(3), gamma(1), delta(1), epsilon(1). CF(0) has three main subunits: a, b and c.

The protein localises to the mitochondrion. The protein resides in the mitochondrion inner membrane. Mitochondrial membrane ATP synthase (F(1)F(0) ATP synthase or Complex V) produces ATP from ADP in the presence of a proton gradient across the membrane which is generated by electron transport complexes of the respiratory chain. F-type ATPases consist of two structural domains, F(1) - containing the extramembraneous catalytic core, and F(0) - containing the membrane proton channel, linked together by a central stalk and a peripheral stalk. During catalysis, ATP synthesis in the catalytic domain of F(1) is coupled via a rotary mechanism of the central stalk subunits to proton translocation. Subunits alpha and beta form the catalytic core in F(1). Rotation of the central stalk against the surrounding alpha(3)beta(3) subunits leads to hydrolysis of ATP in three separate catalytic sites on the beta subunits. Subunit alpha does not bear the catalytic high-affinity ATP-binding sites. This chain is ATP synthase subunit alpha, mitochondrial (ATP1), found in Kluyveromyces lactis (strain ATCC 8585 / CBS 2359 / DSM 70799 / NBRC 1267 / NRRL Y-1140 / WM37) (Yeast).